The sequence spans 625 residues: Alpha-protein kinase vwkA (625 aa).

Residues 1-15 (MESKYVLSTEKESKT) are compositionally biased toward basic and acidic residues. Positions 1–64 (MESKYVLSTE…GLSSGGSKTH (64 aa)) are disordered. Polar residues-rich tracts occupy residues 25–39 (DMDS…TSLG) and 46–63 (SLKT…GSKT). A coiled-coil region spans residues 87 to 114 (TKDSITLAKEKEKKIEKRNEEIKLTFKA). One can recognise a VWFA domain in the interval 122-322 (DLLFIVDCTG…KMNERIFISI (201 aa)). Residues 386–600 (TCLSSSYEMK…HCKKLGLTIP (215 aa)) form the Alpha-type protein kinase domain. ATP is bound at residue 570-576 (GSCNLGK). The segment at 602-625 (FTSSSSTSSSSRSTSSSSSISYSY) is disordered.

It belongs to the protein kinase superfamily. Alpha-type protein kinase family. ALPK subfamily. As to quaternary structure, interacts with calmodulin; in the presence of calcium. In terms of processing, autophosphorylated, in vitro.

It localises to the cytoplasm. The protein localises to the cytosol. The protein resides in the perinuclear region. Its subcellular location is the contractile vacuole membrane. The catalysed reaction is L-seryl-[protein] + ATP = O-phospho-L-seryl-[protein] + ADP + H(+). The enzyme catalyses L-threonyl-[protein] + ATP = O-phospho-L-threonyl-[protein] + ADP + H(+). Its activity is regulated as follows. Autophosphorylation activity enhanced by calcium/calmodulin. In terms of biological role, displays a modest preference for threonine over serine residues. Does not phosphorylate myosin II, however can phosphorylate MBP, in vitro. May be involved in the regulation of myosin II function during cytokinesis. Overexpression leads to impaired cell proliferation in suspension culture and fails to develop beyond the mound stage. Both overexpression and absence of the gene can result in defects in cytokinesis and alterations in myosin II abundance and assembly. This Dictyostelium discoideum (Social amoeba) protein is Alpha-protein kinase vwkA (vwkA).